A 384-amino-acid chain; its full sequence is Secreted LysM effector LysM14 (384 aa).

Residues 1–35 form the signal peptide; the sequence is MGWSPRWKVMLRGIFNAMISIHILLSLLFAHIATA. The LysM domain maps to 64–112; sequence YTYTIQEGDTCAKLAQRYQVTTSNIETWNVGSWGWPGCAKIKQGDFVCL. The segment at 185-220 is disordered; it reads STTKSAASKTTTTSNPTTTSKTTITSKPTTTSKPTT.

It belongs to the secreted LysM effector family.

It is found in the secreted. Its function is as follows. Secreted LysM effector that might have a role in sequestration of chitin oligosaccharides (breakdown products of fungal cell walls that are released during invasion and act as triggers of host immunity) to dampen host defense. This Penicillium expansum (Blue mold rot fungus) protein is Secreted LysM effector LysM14.